A 304-amino-acid polypeptide reads, in one-letter code: Putative F-box/LRR-repeat protein 21 (304 aa).

The F-box domain occupies 43-90 (RRNWVDLPPELTTSILLRLSLTDILDNAQKVCKEWRRICKDPSMWRKI). LRR repeat units follow at residues 132–159 (LSYI…GVVN), 173–198 (THSC…KLNS), 218–241 (GPLE…HLQL), and 243–268 (ANRL…DVRK).

The polypeptide is Putative F-box/LRR-repeat protein 21 (FBL21) (Arabidopsis thaliana (Mouse-ear cress)).